We begin with the raw amino-acid sequence, 123 residues long: Small ribosomal subunit protein uS13 (123 aa).

The interval 93–123 (HRKGLPVRGQNTKNNARTRKGPAKAIAGKKK) is disordered. Positions 108–123 (ARTRKGPAKAIAGKKK) are enriched in basic residues.

The protein belongs to the universal ribosomal protein uS13 family. As to quaternary structure, part of the 30S ribosomal subunit. Forms a loose heterodimer with protein S19. Forms two bridges to the 50S subunit in the 70S ribosome.

In terms of biological role, located at the top of the head of the 30S subunit, it contacts several helices of the 16S rRNA. In the 70S ribosome it contacts the 23S rRNA (bridge B1a) and protein L5 of the 50S subunit (bridge B1b), connecting the 2 subunits; these bridges are implicated in subunit movement. Contacts the tRNAs in the A and P-sites. The polypeptide is Small ribosomal subunit protein uS13 (Leuconostoc citreum (strain KM20)).